A 348-amino-acid chain; its full sequence is tRNA pseudouridine synthase D (348 aa).

Aspartate 81 serves as the catalytic Nucleophile. A TRUD domain is found at glycine 158 to leucine 304.

It belongs to the pseudouridine synthase TruD family.

The catalysed reaction is uridine(13) in tRNA = pseudouridine(13) in tRNA. In terms of biological role, responsible for synthesis of pseudouridine from uracil-13 in transfer RNAs. This is tRNA pseudouridine synthase D from Aliivibrio salmonicida (strain LFI1238) (Vibrio salmonicida (strain LFI1238)).